Here is a 281-residue protein sequence, read N- to C-terminus: Imidazole glycerol phosphate synthase subunit HisF (281 aa).

Catalysis depends on residues D12 and D131. A disordered region spans residues 256–281 (VRQAEPLPQPAREGLGDSARRAMSSG).

It belongs to the HisA/HisF family. Heterodimer of HisH and HisF.

The protein resides in the cytoplasm. The enzyme catalyses 5-[(5-phospho-1-deoxy-D-ribulos-1-ylimino)methylamino]-1-(5-phospho-beta-D-ribosyl)imidazole-4-carboxamide + L-glutamine = D-erythro-1-(imidazol-4-yl)glycerol 3-phosphate + 5-amino-1-(5-phospho-beta-D-ribosyl)imidazole-4-carboxamide + L-glutamate + H(+). The protein operates within amino-acid biosynthesis; L-histidine biosynthesis; L-histidine from 5-phospho-alpha-D-ribose 1-diphosphate: step 5/9. In terms of biological role, IGPS catalyzes the conversion of PRFAR and glutamine to IGP, AICAR and glutamate. The HisF subunit catalyzes the cyclization activity that produces IGP and AICAR from PRFAR using the ammonia provided by the HisH subunit. The sequence is that of Imidazole glycerol phosphate synthase subunit HisF from Thermosynechococcus vestitus (strain NIES-2133 / IAM M-273 / BP-1).